We begin with the raw amino-acid sequence, 342 residues long: N-acetyl-gamma-glutamyl-phosphate reductase (342 aa).

The active site involves Cys149.

Belongs to the NAGSA dehydrogenase family. Type 1 subfamily.

It is found in the cytoplasm. It catalyses the reaction N-acetyl-L-glutamate 5-semialdehyde + phosphate + NADP(+) = N-acetyl-L-glutamyl 5-phosphate + NADPH + H(+). Its pathway is amino-acid biosynthesis; L-arginine biosynthesis; N(2)-acetyl-L-ornithine from L-glutamate: step 3/4. Catalyzes the NADPH-dependent reduction of N-acetyl-5-glutamyl phosphate to yield N-acetyl-L-glutamate 5-semialdehyde. This is N-acetyl-gamma-glutamyl-phosphate reductase from Paracoccus denitrificans (strain Pd 1222).